A 234-amino-acid polypeptide reads, in one-letter code: Glucosamine-6-phosphate deaminase (234 aa).

Catalysis depends on aspartate 63, which acts as the Proton acceptor; for enolization step. Asparagine 129 functions as the For ring-opening step in the catalytic mechanism. Histidine 131 serves as the catalytic Proton acceptor; for ring-opening step. Glutamate 136 (for ring-opening step) is an active-site residue.

Belongs to the glucosamine/galactosamine-6-phosphate isomerase family. NagB subfamily.

The catalysed reaction is alpha-D-glucosamine 6-phosphate + H2O = beta-D-fructose 6-phosphate + NH4(+). It participates in amino-sugar metabolism; N-acetylneuraminate degradation; D-fructose 6-phosphate from N-acetylneuraminate: step 5/5. In terms of biological role, catalyzes the reversible isomerization-deamination of glucosamine 6-phosphate (GlcN6P) to form fructose 6-phosphate (Fru6P) and ammonium ion. The chain is Glucosamine-6-phosphate deaminase from Listeria monocytogenes serotype 4b (strain CLIP80459).